The sequence spans 492 residues: 2,3-bisphosphoglycerate-independent phosphoglycerate mutase (492 aa).

2 residues coordinate Mn(2+): D11 and S61. Residue S61 is the Phosphoserine intermediate of the active site. Substrate contacts are provided by residues H118, 147 to 148 (RD), R177, R183, 248 to 251 (RNDR), and K321. The Mn(2+) site is built by D387, H391, D428, H429, and H446.

This sequence belongs to the BPG-independent phosphoglycerate mutase family. In terms of assembly, monomer. Mn(2+) serves as cofactor.

The catalysed reaction is (2R)-2-phosphoglycerate = (2R)-3-phosphoglycerate. Its pathway is carbohydrate degradation; glycolysis; pyruvate from D-glyceraldehyde 3-phosphate: step 3/5. Functionally, catalyzes the interconversion of 2-phosphoglycerate and 3-phosphoglycerate. In Helicobacter acinonychis (strain Sheeba), this protein is 2,3-bisphosphoglycerate-independent phosphoglycerate mutase.